Consider the following 227-residue polypeptide: tRNA (guanine-N(1)-)-methyltransferase (227 aa).

Residues Gly-107 and 127–132 contribute to the S-adenosyl-L-methionine site; that span reads LGDFIL.

This sequence belongs to the RNA methyltransferase TrmD family. In terms of assembly, homodimer.

It is found in the cytoplasm. The enzyme catalyses guanosine(37) in tRNA + S-adenosyl-L-methionine = N(1)-methylguanosine(37) in tRNA + S-adenosyl-L-homocysteine + H(+). Its function is as follows. Specifically methylates guanosine-37 in various tRNAs. In Mesomycoplasma hyopneumoniae (strain 232) (Mycoplasma hyopneumoniae), this protein is tRNA (guanine-N(1)-)-methyltransferase.